The primary structure comprises 132 residues: Ribosome-binding factor A (132 aa).

It belongs to the RbfA family. As to quaternary structure, monomer. Binds 30S ribosomal subunits, but not 50S ribosomal subunits or 70S ribosomes.

The protein localises to the cytoplasm. Functionally, one of several proteins that assist in the late maturation steps of the functional core of the 30S ribosomal subunit. Associates with free 30S ribosomal subunits (but not with 30S subunits that are part of 70S ribosomes or polysomes). Required for efficient processing of 16S rRNA. May interact with the 5'-terminal helix region of 16S rRNA. This chain is Ribosome-binding factor A, found in Edwardsiella ictaluri (strain 93-146).